A 230-amino-acid chain; its full sequence is Large ribosomal subunit protein uL1 (230 aa).

It belongs to the universal ribosomal protein uL1 family. As to quaternary structure, part of the 50S ribosomal subunit.

In terms of biological role, binds directly to 23S rRNA. The L1 stalk is quite mobile in the ribosome, and is involved in E site tRNA release. Functionally, protein L1 is also a translational repressor protein, it controls the translation of the L11 operon by binding to its mRNA. In Staphylococcus aureus (strain N315), this protein is Large ribosomal subunit protein uL1.